The chain runs to 204 residues: Lymphotoxin-alpha (204 aa).

Residues 1 to 33 (MTPPGRLYLRRVCSTPILLLLGLLLALPPEAQG) form the signal peptide. One can recognise a THD domain in the interval 62 to 204 (PAAHLVGDPS…SSVFFGAFAL (143 aa)). N-linked (GlcNAc...) asparagine glycosylation occurs at Asn95. An intrachain disulfide couples Cys119 to Cys155.

It belongs to the tumor necrosis factor family. In terms of assembly, homotrimer, and heterotrimer of either two LTB and one LTA subunits or (less prevalent) two LTA and one LTB subunits. Interacts with TNFRSF14.

Its subcellular location is the secreted. The protein localises to the membrane. Its function is as follows. Cytokine that in its homotrimeric form binds to TNFRSF1A/TNFR1, TNFRSF1B/TNFBR and TNFRSF14/HVEM. In its heterotrimeric form with LTB binds to TNFRSF3/LTBR. Lymphotoxin is produced by lymphocytes and is cytotoxic for a wide range of tumor cells in vitro and in vivo. This Sus scrofa (Pig) protein is Lymphotoxin-alpha (LTA).